The sequence spans 295 residues: MEIRWLEGFIAVAEELHFSNAAIRLGMPQSPLSQLIRRLESELGQKLFDRSTRSVELTAAGRAFLPHARGIVASAAVAREAVNAAEGEIVGVVRIGFSGVLNYSTLPLLTSEVHKRLPNVELELVGQKLTREAVSLLRLGALDITLMGLPIEDPEIETRLISLEEFCVVLPKDHRLAGEDVVDLVDLAEDGFVTTPEFAGSVFRNSTFQLCAEAGFVPRISQQVNDPYMALLLVGAGVGVAITTHGTGLLAPPNTVHLPIKQHSVELRHGIAWMKGSGRVARDAVIDIALDIFKP.

The HTH lysR-type domain maps to 1 to 58; the sequence is MEIRWLEGFIAVAEELHFSNAAIRLGMPQSPLSQLIRRLESELGQKLFDRSTRSVELT. The H-T-H motif DNA-binding region spans 18–37; it reads FSNAAIRLGMPQSPLSQLIR.

It belongs to the LysR transcriptional regulatory family.

Its function is as follows. Activates expression of the shikimate transporter ShiA in the presence of shikimate. Binds to the shiA promoter region. The sequence is that of HTH-type transcriptional regulator ShiR from Corynebacterium glutamicum (strain R).